The sequence spans 170 residues: tRNA-splicing endonuclease (170 aa).

Residues Tyr-106, His-116, and Lys-147 contribute to the active site.

Belongs to the tRNA-intron endonuclease family. Archaeal short subfamily. Homotetramer; although the tetramer contains four active sites, only two participate in the cleavage. Therefore, it should be considered as a dimer of dimers.

The catalysed reaction is pretRNA = a 3'-half-tRNA molecule with a 5'-OH end + a 5'-half-tRNA molecule with a 2',3'-cyclic phosphate end + an intron with a 2',3'-cyclic phosphate and a 5'-hydroxyl terminus.. Functionally, endonuclease that removes tRNA introns. Cleaves pre-tRNA at the 5'- and 3'-splice sites to release the intron. The products are an intron and two tRNA half-molecules bearing 2',3' cyclic phosphate and 5'-OH termini. Recognizes a pseudosymmetric substrate in which 2 bulged loops of 3 bases are separated by a stem of 4 bp. The polypeptide is tRNA-splicing endonuclease (Methanothermobacter thermautotrophicus (strain ATCC 29096 / DSM 1053 / JCM 10044 / NBRC 100330 / Delta H) (Methanobacterium thermoautotrophicum)).